The following is a 205-amino-acid chain: MIAKICGLQSVEAAQQAVDNGADLIGVICVPNRKRTVDPEIARSISKICHGTGTRLVGVFRNQPKEEVRQLAQEYELDVVQLHGDEDWQEYASYVGLPLLKRVVFPRDVSLVSQMDGEVCTPLFDSEAGGSGEKLDWQAIGSWFQDSQLTRGYLLAGGLSPDNVVEALRVPGVVGVDVSGGVETDGTKDLAKIKQFLELYKVNVN.

This sequence belongs to the TrpF family.

The catalysed reaction is N-(5-phospho-beta-D-ribosyl)anthranilate = 1-(2-carboxyphenylamino)-1-deoxy-D-ribulose 5-phosphate. Its pathway is amino-acid biosynthesis; L-tryptophan biosynthesis; L-tryptophan from chorismate: step 3/5. This Zygosaccharomyces bailii protein is N-(5'-phosphoribosyl)anthranilate isomerase (TRP1).